The primary structure comprises 211 residues: DNA-directed RNA polymerases I, II, and III subunit RPABC1 (211 aa).

Belongs to the archaeal Rpo5/eukaryotic RPB5 RNA polymerase subunit family. Component of the RNA polymerase I (Pol I), RNA polymerase II (Pol II) and RNA polymerase III (Pol III) complexes consisting of at least 13, 12 and 17 subunits, respectively. In RNA Pol II, this subunit is present in 2-fold molar excess over the other subunits.

It localises to the nucleus. DNA-dependent RNA polymerase catalyzes the transcription of DNA into RNA using the four ribonucleoside triphosphates as substrates. Common component of RNA polymerases I, II and III which synthesize ribosomal RNA precursors, mRNA precursors and many functional non-coding RNAs, and small RNAs, such as 5S rRNA and tRNAs, respectively. Pol II is the central component of the basal RNA polymerase II transcription machinery. Pols are composed of mobile elements that move relative to each other. In Pol II, RPB5 is part of the lower jaw surrounding the central large cleft and thought to grab the incoming DNA template. Seems to be the major component in this process. This chain is DNA-directed RNA polymerases I, II, and III subunit RPABC1, found in Caenorhabditis briggsae.